A 311-amino-acid polypeptide reads, in one-letter code: Elongation factor Ts (311 aa).

The interval Thr-81–Val-84 is involved in Mg(2+) ion dislocation from EF-Tu.

This sequence belongs to the EF-Ts family.

It is found in the cytoplasm. In terms of biological role, associates with the EF-Tu.GDP complex and induces the exchange of GDP to GTP. It remains bound to the aminoacyl-tRNA.EF-Tu.GTP complex up to the GTP hydrolysis stage on the ribosome. The protein is Elongation factor Ts of Trichlorobacter lovleyi (strain ATCC BAA-1151 / DSM 17278 / SZ) (Geobacter lovleyi).